The sequence spans 284 residues: UPF0354 protein SERP1303 (284 aa).

It belongs to the UPF0354 family.

This is UPF0354 protein SERP1303 from Staphylococcus epidermidis (strain ATCC 35984 / DSM 28319 / BCRC 17069 / CCUG 31568 / BM 3577 / RP62A).